The sequence spans 7756 residues: Linear gramicidin synthase subunit C (7756 aa).

Carrier domains are found at residues 977-1052, 2042-2116, 3557-3632, 4621-4695, 6141-6216, and 7200-7274; these read EPRN…AALQ, APAT…ADSS, APRT…ASLL, APAT…TVTD, APRK…AGLL, and APET…GDSV. Residues Ser-1012, Ser-2077, Ser-3592, Ser-4656, Ser-6176, and Ser-7235 each carry the O-(pantetheine 4'-phosphoryl)serine modification.

This sequence belongs to the ATP-dependent AMP-binding enzyme family. Large multienzyme complex composed of 4 subunits; LgrA, LgrB, LgrC and LgrD. Pantetheine 4'-phosphate is required as a cofactor.

Activates the 7th to 12th amino acids (Val, D-Val, Trp, D-Leu, Xaa and D-Leu) in linear gramicidin and catalyzes the formation of the peptide bond between them. This enzyme is also responsible for the epimerization of the 8th (D-Val), the 10th (D-Leu) and 12th (D-Leu) amino acids. The 11th (Xaa) amino acid is Trp in linear gramicidin A; Phe in linear gramicidin B and Tyr in linear gramicidin C. In Brevibacillus parabrevis, this protein is Linear gramicidin synthase subunit C (lgrC).